A 449-amino-acid polypeptide reads, in one-letter code: Tripartite motif-containing protein 64B (449 aa).

The RING-type zinc-finger motif lies at 15 to 56 (CCICVNYFIDPVTIDCGHSFCRPCLCLCSEEGRAPMRCPSCR). A B box-type zinc finger spans residues 87-128 (SSDNICVLHEETKELFCEADKRLLCGPCSESPEHMAHSHSPI). Zn(2+)-binding residues include Cys-92, His-95, Cys-114, and His-120. Positions 189 to 225 (LDEEEQRHLQALEREAEELFQQLQDSQVRMTQHLERM) form a coiled coil. Residues 268-449 (ELTSWCITGV…LRPFFCFGCT (182 aa)) enclose the B30.2/SPRY domain.

Belongs to the TRIM/RBCC family.

The protein is Tripartite motif-containing protein 64B (TRIM64B) of Homo sapiens (Human).